The sequence spans 1184 residues: C5a peptidase (1184 aa).

Residues 1–31 form the signal peptide; that stretch reads MRKKQKLPFDKLAIALMSTSILLNAQSDIKA. Polar residues-rich tracts occupy residues 33 to 52 and 89 to 100; these read TVTEDTPATEQAVETPQPTA and AKTTDTPATSKA. The interval 33–117 is disordered; sequence TVTEDTPATE…PSQVKTLQEK (85 aa). A Peptidase S8 domain is found at 99-581; that stretch reads KATIRDLNDP…AGAVDAKKAS (483 aa). Active-site charge relay system residues include aspartate 130, histidine 193, and serine 512. 4 stretches are compositionally biased toward basic and acidic residues: residues 1029–1054, 1061–1071, 1078–1088, and 1095–1107; these read EGHSNKPEQDGSDQVPDKKPETKPEQ, PDKKPETKPEQ, PDKKPEAKPEQ, and PDKKPETKPEKDS. A disordered region spans residues 1029 to 1150; sequence EGHSNKPEQD…RDQLPTTNDK (122 aa). 4 consecutive repeat copies span residues 1034 to 1067, 1068 to 1084, 1085 to 1101, and 1102 to 1118. The tract at residues 1034-1118 is 4 X 17 AA tandem repeats; the sequence is KPEQDGSDQV…GQTPGKTPQK (85 aa). Positions 1109-1123 are enriched in polar residues; it reads GQTPGKTPQKGQPSR. Positions 1144–1148 match the LPXTG sorting signal motif; sequence LPTTN. Threonine 1147 carries the post-translational modification Pentaglycyl murein peptidoglycan amidated threonine. A propeptide spans 1148-1184 (removed by sortase); the sequence is NDKDTNRLHLLKLVMTTFFFGLVAHIFKTKRQKETKK.

Belongs to the peptidase S8 family. Post-translationally, cleaved by SpeB protease; leading to its degradation. Degradation by SpeB is probably strictly regulated to preserve integrity of C5a peptidase.

The protein resides in the secreted. Its subcellular location is the cell wall. It catalyses the reaction The primary cleavage site is at 67-His-|-Lys-68 in human C5a with a minor secondary cleavage site at 58-Ala-|-Ser-59.. This virulence factor of S.pyogenes specifically cleaves the human serum chemotaxin C5a at '68-Lys-|-Asp-69' bond near its C-terminus, destroying its ability to serve as a chemoattractant. The sequence is that of C5a peptidase (scpA) from Streptococcus pyogenes serotype M6 (strain ATCC BAA-946 / MGAS10394).